Consider the following 252-residue polypeptide: Imidazole glycerol phosphate synthase subunit HisF (252 aa).

Residues Asp11 and Asp130 contribute to the active site.

It belongs to the HisA/HisF family. In terms of assembly, heterodimer of HisH and HisF.

The protein localises to the cytoplasm. The enzyme catalyses 5-[(5-phospho-1-deoxy-D-ribulos-1-ylimino)methylamino]-1-(5-phospho-beta-D-ribosyl)imidazole-4-carboxamide + L-glutamine = D-erythro-1-(imidazol-4-yl)glycerol 3-phosphate + 5-amino-1-(5-phospho-beta-D-ribosyl)imidazole-4-carboxamide + L-glutamate + H(+). It functions in the pathway amino-acid biosynthesis; L-histidine biosynthesis; L-histidine from 5-phospho-alpha-D-ribose 1-diphosphate: step 5/9. Functionally, IGPS catalyzes the conversion of PRFAR and glutamine to IGP, AICAR and glutamate. The HisF subunit catalyzes the cyclization activity that produces IGP and AICAR from PRFAR using the ammonia provided by the HisH subunit. This chain is Imidazole glycerol phosphate synthase subunit HisF, found in Polynucleobacter asymbioticus (strain DSM 18221 / CIP 109841 / QLW-P1DMWA-1) (Polynucleobacter necessarius subsp. asymbioticus).